The primary structure comprises 302 residues: MIFPNIDPIVHIGPWALQWGPLALRWYALAYVVGILLGWRYAVMLVRDAKLWGGHKPTATPLQIDDLVLWITLGIILGGRIGYVLFYMMLNEGQRAGLAEHPFDVFKIWEGGMSFHGGFLGVCAAIVLFARQQKIDMLKLGDLIAPVAPIGLFFGRCANFINGELWGRETTHPWGMIFCNETIQKANQGGCPAGHLPRHPSQLYEAALEGVLLFLILNFAAHKLKWLQRRGALVATFLICYGLFRVSLEGVRNPDHGMPNFPLGLTMGMILSIPMLAVGVWLLWRALREPVPPPLAEDHEPA.

3 helical membrane-spanning segments follow: residues 26–46 (WYALAYVVGILLGWRYAVMLV), 67–87 (LVLWITLGIILGGRIGYVLFY), and 108–128 (IWEGGMSFHGGFLGVCAAIVL). Residue arginine 156 coordinates a 1,2-diacyl-sn-glycero-3-phospho-(1'-sn-glycerol). Helical transmembrane passes span 231 to 251 (GALVATFLICYGLFRVSLEGV) and 263 to 283 (LGLTMGMILSIPMLAVGVWLL).

It belongs to the Lgt family.

The protein resides in the cell inner membrane. It catalyses the reaction L-cysteinyl-[prolipoprotein] + a 1,2-diacyl-sn-glycero-3-phospho-(1'-sn-glycerol) = an S-1,2-diacyl-sn-glyceryl-L-cysteinyl-[prolipoprotein] + sn-glycerol 1-phosphate + H(+). It participates in protein modification; lipoprotein biosynthesis (diacylglyceryl transfer). Its function is as follows. Catalyzes the transfer of the diacylglyceryl group from phosphatidylglycerol to the sulfhydryl group of the N-terminal cysteine of a prolipoprotein, the first step in the formation of mature lipoproteins. In Caulobacter sp. (strain K31), this protein is Phosphatidylglycerol--prolipoprotein diacylglyceryl transferase.